Here is a 353-residue protein sequence, read N- to C-terminus: Photosystem II protein D1 (353 aa).

Position 2 is an N-acetylthreonine (Thr2). A Phosphothreonine modification is found at Thr2. 3 helical membrane-spanning segments follow: residues 29–46, 118–133, and 142–156; these read YIGWFGVLMIPTLLTATS, HFLLGVACYMGREWEL, and WIAVAYSAPVAAATA. His118 provides a ligand contact to chlorophyll a. Position 126 (Tyr126) interacts with pheophytin a. Asp170 and Glu189 together coordinate [CaMn4O5] cluster. Residues 197 to 218 form a helical membrane-spanning segment; that stretch reads FHMLGVAGVFGGSLFSAMHGSL. His198 is a chlorophyll a binding site. A quinone contacts are provided by residues His215 and 264 to 265; that span reads SF. Residue His215 coordinates Fe cation. His272 provides a ligand contact to Fe cation. The helical transmembrane segment at 274–288 threads the bilayer; that stretch reads FLAAWPVVGIWFTAL. The [CaMn4O5] cluster site is built by His332, Glu333, Asp342, and Ala344. Residues 345–353 constitute a propeptide that is removed on maturation; it reads AVEVPSING.

It belongs to the reaction center PufL/M/PsbA/D family. As to quaternary structure, PSII is composed of 1 copy each of membrane proteins PsbA, PsbB, PsbC, PsbD, PsbE, PsbF, PsbH, PsbI, PsbJ, PsbK, PsbL, PsbM, PsbT, PsbX, PsbY, PsbZ, Psb30/Ycf12, at least 3 peripheral proteins of the oxygen-evolving complex and a large number of cofactors. It forms dimeric complexes. The cofactor is The D1/D2 heterodimer binds P680, chlorophylls that are the primary electron donor of PSII, and subsequent electron acceptors. It shares a non-heme iron and each subunit binds pheophytin, quinone, additional chlorophylls, carotenoids and lipids. D1 provides most of the ligands for the Mn4-Ca-O5 cluster of the oxygen-evolving complex (OEC). There is also a Cl(-1) ion associated with D1 and D2, which is required for oxygen evolution. The PSII complex binds additional chlorophylls, carotenoids and specific lipids.. Tyr-161 forms a radical intermediate that is referred to as redox-active TyrZ, YZ or Y-Z. Post-translationally, C-terminally processed by CTPA; processing is essential to allow assembly of the oxygen-evolving complex and thus photosynthetic growth.

It is found in the plastid. The protein localises to the chloroplast thylakoid membrane. It catalyses the reaction 2 a plastoquinone + 4 hnu + 2 H2O = 2 a plastoquinol + O2. Photosystem II (PSII) is a light-driven water:plastoquinone oxidoreductase that uses light energy to abstract electrons from H(2)O, generating O(2) and a proton gradient subsequently used for ATP formation. It consists of a core antenna complex that captures photons, and an electron transfer chain that converts photonic excitation into a charge separation. The D1/D2 (PsbA/PsbD) reaction center heterodimer binds P680, the primary electron donor of PSII as well as several subsequent electron acceptors. In Cucumis sativus (Cucumber), this protein is Photosystem II protein D1.